Reading from the N-terminus, the 376-residue chain is Ribonucleoside-diphosphate reductase 1 subunit beta (376 aa).

The Fe cation site is built by Asp85, Glu116, and His119. Tyr123 is an active-site residue. Fe cation-binding residues include Glu205, Glu239, and His242.

It belongs to the ribonucleoside diphosphate reductase small chain family. Tetramer of two alpha (R1) and two beta (R2) subunits. The B1 protein is a dimer of alpha subunits. A radical transfer pathway occurs between Tyr-123 of R2 and R1. The cofactor is Fe cation.

It catalyses the reaction a 2'-deoxyribonucleoside 5'-diphosphate + [thioredoxin]-disulfide + H2O = a ribonucleoside 5'-diphosphate + [thioredoxin]-dithiol. Its function is as follows. Provides the precursors necessary for DNA synthesis. Catalyzes the biosynthesis of deoxyribonucleotides from the corresponding ribonucleotides. R2 contains the tyrosyl radical required for catalysis. The chain is Ribonucleoside-diphosphate reductase 1 subunit beta (nrdB) from Escherichia coli O157:H7.